The sequence spans 151 residues: UPF0208 membrane protein ECA3038 (151 aa).

A run of 2 helical transmembrane segments spans residues 46-66 (FGIRIMPPLAVFTLTWQIALG) and 69-89 (LGPAIATALFACSLPLQGLWW).

It belongs to the UPF0208 family.

The protein resides in the cell inner membrane. The chain is UPF0208 membrane protein ECA3038 from Pectobacterium atrosepticum (strain SCRI 1043 / ATCC BAA-672) (Erwinia carotovora subsp. atroseptica).